The primary structure comprises 187 residues: Early E3 20.6 kDa glycoprotein (187 aa).

5 N-linked (GlcNAc...) asparagine; by host glycosylation sites follow: asparagine 30, asparagine 73, asparagine 117, asparagine 134, and asparagine 135.

This sequence belongs to the adenoviridae E3_20 family.

The chain is Early E3 20.6 kDa glycoprotein from Human adenovirus B serotype 11 (strain Slobiski) (HAdV-11).